The chain runs to 393 residues: Formate-dependent phosphoribosylglycinamide formyltransferase (393 aa).

N(1)-(5-phospho-beta-D-ribosyl)glycinamide-binding positions include 22–23 (EL) and Glu-82. ATP is bound by residues Arg-114, Lys-155, 160-165 (SSGKGQ), 195-198 (EGFV), and Glu-203. One can recognise an ATP-grasp domain in the interval 119–308 (RLAAEELGLV…EFALHVRAIL (190 aa)). Residues Glu-267 and Glu-279 each contribute to the Mg(2+) site. N(1)-(5-phospho-beta-D-ribosyl)glycinamide contacts are provided by residues Asp-286, Lys-356, and 363 to 364 (RR).

Belongs to the PurK/PurT family. As to quaternary structure, homodimer.

The enzyme catalyses N(1)-(5-phospho-beta-D-ribosyl)glycinamide + formate + ATP = N(2)-formyl-N(1)-(5-phospho-beta-D-ribosyl)glycinamide + ADP + phosphate + H(+). Its pathway is purine metabolism; IMP biosynthesis via de novo pathway; N(2)-formyl-N(1)-(5-phospho-D-ribosyl)glycinamide from N(1)-(5-phospho-D-ribosyl)glycinamide (formate route): step 1/1. Its function is as follows. Involved in the de novo purine biosynthesis. Catalyzes the transfer of formate to 5-phospho-ribosyl-glycinamide (GAR), producing 5-phospho-ribosyl-N-formylglycinamide (FGAR). Formate is provided by PurU via hydrolysis of 10-formyl-tetrahydrofolate. The protein is Formate-dependent phosphoribosylglycinamide formyltransferase of Solidesulfovibrio magneticus (strain ATCC 700980 / DSM 13731 / RS-1) (Desulfovibrio magneticus).